We begin with the raw amino-acid sequence, 364 residues long: C2 calcium-dependent domain-containing protein 4A (364 aa).

2 disordered regions span residues 118 to 175 (GSPS…PPRC) and 192 to 242 (AGRS…RPER). Positions 220–233 (SPGSPTQAPVTSLS) are enriched in polar residues. In terms of domain architecture, C2 spans 254–364 (AGGALRLAAE…ELLLGPLLLL (111 aa)).

Belongs to the C2CD4 family.

The protein resides in the nucleus. Its function is as follows. May be involved in inflammatory process. May regulate cell architecture and adhesion. The polypeptide is C2 calcium-dependent domain-containing protein 4A (C2CD4A) (Bos taurus (Bovine)).